The primary structure comprises 192 residues: Glycerol-3-phosphate acyltransferase (192 aa).

The next 5 membrane-spanning stretches (helical) occupy residues methionine 4 to leucine 24, leucine 54 to serine 74, isoleucine 80 to phenylalanine 100, alanine 112 to leucine 132, and leucine 154 to valine 174.

It belongs to the PlsY family. Probably interacts with PlsX.

It localises to the cell inner membrane. The catalysed reaction is an acyl phosphate + sn-glycerol 3-phosphate = a 1-acyl-sn-glycero-3-phosphate + phosphate. Its pathway is lipid metabolism; phospholipid metabolism. Catalyzes the transfer of an acyl group from acyl-phosphate (acyl-PO(4)) to glycerol-3-phosphate (G3P) to form lysophosphatidic acid (LPA). This enzyme utilizes acyl-phosphate as fatty acyl donor, but not acyl-CoA or acyl-ACP. The polypeptide is Glycerol-3-phosphate acyltransferase (Pseudomonas savastanoi pv. phaseolicola (strain 1448A / Race 6) (Pseudomonas syringae pv. phaseolicola (strain 1448A / Race 6))).